The chain runs to 550 residues: CCR4-NOT transcription complex subunit 6-like-A (550 aa).

Residues 1–148 (MPKEKYDPPD…LYQEPDGMRK (148 aa)) form a required for interaction with cnot1, cnot3 and cnot7 region. 4 LRR repeats span residues 52 to 73 (HLTV…IAKL), 75 to 96 (NLVY…LGNV), 98 to 120 (SLRE…GRLF), and 121 to 143 (RLQT…YQEP). Positions 153–550 (MLDNLSVHPE…INGVHLPSRR (398 aa)) are nuclease domain. E235 contributes to the Mg(2+) binding site. 4 residues coordinate substrate: E235, E271, H355, and P360. D405 lines the Mg(2+) pocket. Residue D405 is the Proton donor/acceptor of the active site. 3 residues coordinate substrate: N407, N474, and F479.

This sequence belongs to the CCR4/nocturin family. Component of the CCR4-NOT complex. Mg(2+) is required as a cofactor.

The protein localises to the cytoplasm. Its subcellular location is the nucleus. It catalyses the reaction Exonucleolytic cleavage of poly(A) to 5'-AMP.. Functionally, poly(A) nuclease with 3'-5' RNase activity. Catalytic component of the CCR4-NOT complex which is one of the major cellular mRNA deadenylases and is linked to various cellular processes including bulk mRNA degradation, miRNA-mediated repression, translational repression during translational initiation and general transcription regulation. Additional complex functions may be a consequence of its influence on mRNA expression. This is CCR4-NOT transcription complex subunit 6-like-A (cnot6l-a) from Xenopus laevis (African clawed frog).